A 76-amino-acid polypeptide reads, in one-letter code: Small proline-rich protein 2F (76 aa).

A run of 3 repeats spans residues 21-29 (PKCPEPCSP), 30-38 (SVCPEPCPP), and 39-47 (PKCPEPCPE). The 3 X 9 AA approximate tandem repeats stretch occupies residues 21–47 (PKCPEPCSPSVCPEPCPPPKCPEPCPE). The segment at 53–76 (SFQQKCPPVQPPPPCQQKCPPKSK) is disordered.

The protein belongs to the cornifin (SPRR) family. Expressed in uterus.

It localises to the cytoplasm. In terms of biological role, cross-linked envelope protein of keratinocytes. It is a keratinocyte protein that first appears in the cell cytosol, but ultimately becomes cross-linked to membrane proteins by transglutaminase. All that results in the formation of an insoluble envelope beneath the plasma membrane. In Mus musculus (Mouse), this protein is Small proline-rich protein 2F (Sprr2f).